We begin with the raw amino-acid sequence, 439 residues long: GTPase Der (439 aa).

2 EngA-type G domains span residues 2–166 and 176–351; these read SVVA…PAPA and TRLA…IEFN. GTP-binding positions include 8-15, 55-59, 118-121, 182-189, 229-233, and 294-297; these read GRPNVGKS, DTGGF, NKVD, DTAGI, and NKWD. Positions 352–436 constitute a KH-like domain; it reads RQVPTGVLNR…PIRLKFKDRN (85 aa).

Belongs to the TRAFAC class TrmE-Era-EngA-EngB-Septin-like GTPase superfamily. EngA (Der) GTPase family. As to quaternary structure, associates with the 50S ribosomal subunit.

GTPase that plays an essential role in the late steps of ribosome biogenesis. This Syntrophotalea carbinolica (strain DSM 2380 / NBRC 103641 / GraBd1) (Pelobacter carbinolicus) protein is GTPase Der.